A 418-amino-acid polypeptide reads, in one-letter code: D-inositol 3-phosphate glycosyltransferase 1 (418 aa).

UDP-N-acetyl-alpha-D-glucosamine contacts are provided by residues 24 to 25 (QP) and Gly32. 1D-myo-inositol 3-phosphate-binding positions include 29–34 (DAGGLN), Lys87, His115, Ser139, and Gln159. Positions 233 and 238 each coordinate UDP-N-acetyl-alpha-D-glucosamine. Mg(2+) contacts are provided by Tyr308, Arg309, and Ala311. Residues Glu321 and Glu329 each contribute to the UDP-N-acetyl-alpha-D-glucosamine site. Thr335 contacts Mg(2+).

Belongs to the glycosyltransferase group 1 family. MshA subfamily. As to quaternary structure, homodimer.

The enzyme catalyses 1D-myo-inositol 3-phosphate + UDP-N-acetyl-alpha-D-glucosamine = 1D-myo-inositol 2-acetamido-2-deoxy-alpha-D-glucopyranoside 3-phosphate + UDP + H(+). Catalyzes the transfer of a N-acetyl-glucosamine moiety to 1D-myo-inositol 3-phosphate to produce 1D-myo-inositol 2-acetamido-2-deoxy-glucopyranoside 3-phosphate in the mycothiol biosynthesis pathway. In Catenulispora acidiphila (strain DSM 44928 / JCM 14897 / NBRC 102108 / NRRL B-24433 / ID139908), this protein is D-inositol 3-phosphate glycosyltransferase 1.